Consider the following 132-residue polypeptide: Holo-[acyl-carrier-protein] synthase (132 aa).

Mg(2+)-binding residues include D13 and E63.

It belongs to the P-Pant transferase superfamily. AcpS family. Requires Mg(2+) as cofactor.

The protein localises to the cytoplasm. It catalyses the reaction apo-[ACP] + CoA = holo-[ACP] + adenosine 3',5'-bisphosphate + H(+). Its function is as follows. Transfers the 4'-phosphopantetheine moiety from coenzyme A to a Ser of acyl-carrier-protein. The polypeptide is Holo-[acyl-carrier-protein] synthase (Gloeobacter violaceus (strain ATCC 29082 / PCC 7421)).